The primary structure comprises 377 residues: Mucin-7 (377 aa).

A signal peptide spans M1–G22. A disordered region spans residues C70–V100. The segment covering K73–Q89 has biased composition (pro residues). 4 N-linked (GlcNAc...) asparagine glycosylation sites follow: N97, N128, N135, and N146. Residues S150–K355 form a disordered region. Repeat copies occupy residues T165–E187, T188–E210, T211–E233, T234–E256, T257–E279, and T280–E302. The span at P169–S183 shows a compositional bias: pro residues. O-linked (GalNAc) threonine; by GALNT13 glycosylation is present at T176. Residues S182 and S183 are each glycosylated (O-linked (GalNAc) serine; by GALNT13). Positions A184–A214 are enriched in low complexity. O-linked (GalNAc) threonine; by GALNT13 glycans are attached at residues T188 and T189. A compositionally biased stretch (pro residues) spans P215–S229. A compositionally biased stretch (low complexity) spans A230–A283. Residues P284 to P298 show a composition bias toward pro residues. Polar residues predominate over residues T309–P329. The segment covering T330–T348 has biased composition (low complexity).

As to quaternary structure, monomer. Post-translationally, N- and O-glycosylated. Contains fucose, mannose, galactose, N-acetylglucosamine and N-acetylgalactosamine. Expressed in salivary gland tissues and only in those that contain mucous acinar cells (e.g. sublingual and submandibular glands) and not in salivary glands containing only serous acinar cells (e.g. parotid gland).

It is found in the secreted. Its function is as follows. May function in a protective capacity by promoting the clearance of bacteria in the oral cavity and aiding in mastication, speech, and swallowing. Binds P.aeruginosa pili. This chain is Mucin-7 (MUC7), found in Homo sapiens (Human).